The chain runs to 343 residues: Anthranilate phosphoribosyltransferase (343 aa).

Residues glycine 84, 87–88 (GD), threonine 92, 94–97 (NIST), 112–120 (KHGNRSASS), and serine 124 contribute to the 5-phospho-alpha-D-ribose 1-diphosphate site. Residue glycine 84 participates in anthranilate binding. Residue serine 96 coordinates Mg(2+). Asparagine 115 provides a ligand contact to anthranilate. Position 170 (arginine 170) interacts with anthranilate. Aspartate 229 and glutamate 230 together coordinate Mg(2+).

This sequence belongs to the anthranilate phosphoribosyltransferase family. In terms of assembly, homodimer. Requires Mg(2+) as cofactor.

It catalyses the reaction N-(5-phospho-beta-D-ribosyl)anthranilate + diphosphate = 5-phospho-alpha-D-ribose 1-diphosphate + anthranilate. The protein operates within amino-acid biosynthesis; L-tryptophan biosynthesis; L-tryptophan from chorismate: step 2/5. Its function is as follows. Catalyzes the transfer of the phosphoribosyl group of 5-phosphorylribose-1-pyrophosphate (PRPP) to anthranilate to yield N-(5'-phosphoribosyl)-anthranilate (PRA). This chain is Anthranilate phosphoribosyltransferase, found in Bordetella bronchiseptica (strain ATCC BAA-588 / NCTC 13252 / RB50) (Alcaligenes bronchisepticus).